Here is a 156-residue protein sequence, read N- to C-terminus: Endoribonuclease YbeY (156 aa).

Residues H122, H126, and H132 each contribute to the Zn(2+) site.

This sequence belongs to the endoribonuclease YbeY family. Requires Zn(2+) as cofactor.

It is found in the cytoplasm. Its function is as follows. Single strand-specific metallo-endoribonuclease involved in late-stage 70S ribosome quality control and in maturation of the 3' terminus of the 16S rRNA. The chain is Endoribonuclease YbeY from Bacillus cereus (strain G9842).